Here is a 309-residue protein sequence, read N- to C-terminus: Dihydroorotate dehydrogenase B (NAD(+)), catalytic subunit (309 aa).

FMN is bound by residues serine 21 and 45–46; that span reads KA. Substrate is bound by residues lysine 45 and 69-73; that span reads NAIGL. FMN contacts are provided by asparagine 99 and asparagine 127. Asparagine 127 lines the substrate pocket. The Nucleophile role is filled by cysteine 130. Positions 165 and 191 each coordinate FMN. Substrate is bound at residue 192 to 193; sequence NT. FMN-binding positions include glycine 217, 243–244, and 265–266; these read GG and GT.

Belongs to the dihydroorotate dehydrogenase family. Type 1 subfamily. Heterotetramer of 2 PyrK and 2 PyrD type B subunits. The cofactor is FMN.

The protein resides in the cytoplasm. The catalysed reaction is (S)-dihydroorotate + NAD(+) = orotate + NADH + H(+). The protein operates within pyrimidine metabolism; UMP biosynthesis via de novo pathway; orotate from (S)-dihydroorotate (NAD(+) route): step 1/1. Catalyzes the conversion of dihydroorotate to orotate with NAD(+) as electron acceptor. This Bacillus mycoides (strain KBAB4) (Bacillus weihenstephanensis) protein is Dihydroorotate dehydrogenase B (NAD(+)), catalytic subunit (pyrD).